The primary structure comprises 139 residues: ATP synthase epsilon chain (139 aa).

Belongs to the ATPase epsilon chain family. In terms of assembly, F-type ATPases have 2 components, CF(1) - the catalytic core - and CF(0) - the membrane proton channel. CF(1) has five subunits: alpha(3), beta(3), gamma(1), delta(1), epsilon(1). CF(0) has three main subunits: a, b and c.

Its subcellular location is the cell inner membrane. Produces ATP from ADP in the presence of a proton gradient across the membrane. The chain is ATP synthase epsilon chain from Pseudomonas putida (strain ATCC 700007 / DSM 6899 / JCM 31910 / BCRC 17059 / LMG 24140 / F1).